The following is an 828-amino-acid chain: USP6 N-terminal-like protein (828 aa).

N-acetylmethionine is present on Met1. One can recognise a Rab-GAP TBC domain in the interval 100–292 (GIPLQLRGEV…RIWDIYIFEG (193 aa)). Residues 355 to 367 (DLPEPGKEDEYPK) show a composition bias toward basic and acidic residues. Residues 355–722 (DLPEPGKEDE…NSGSPKNGKL (368 aa)) form a disordered region. 3 positions are modified to phosphoserine: Ser391, Ser396, and Ser400. Residues 434–451 (KSVEEESKKLKDEADFQR) show a composition bias toward basic and acidic residues. Residues 465–478 (NHAAANQNSNATSN) are compositionally biased toward low complexity. 2 stretches are compositionally biased toward basic and acidic residues: residues 498–508 (RTAKYTMEGKG) and 535–544 (KALDAEDGKR). Phosphoserine occurs at positions 546 and 549. Tyr582 carries the phosphotyrosine modification. Residue Ser585 is modified to Phosphoserine. The segment covering 592–603 (PSSSPSKVSNKF) has biased composition (polar residues). Phosphoserine is present on residues Ser642, Ser655, Ser659, Ser676, and Ser680. 2 stretches are compositionally biased toward polar residues: residues 648–666 (TANS…QLNP) and 673–683 (STLSVSASPEK). Low complexity predominate over residues 686 to 697 (SRPSPLVLPSSR). Residue Ser716 is modified to Phosphoserine. The residue at position 729 (Tyr729) is a Phosphotyrosine. Residues 789 to 817 (KASPAAEDASPSGYPYSGPPPPAYHYRNR) form a disordered region.

In terms of assembly, interacts with EPS8. As to expression, widely expressed.

The protein localises to the golgi apparatus. Its subcellular location is the cytoplasmic vesicle. In terms of biological role, acts as a GTPase-activating protein for RAB5A and RAB43. Involved in receptor trafficking. In complex with EPS8 inhibits internalization of EGFR. Involved in retrograde transport from the endocytic pathway to the Golgi apparatus. Involved in the transport of Shiga toxin from early and recycling endosomes to the trans-Golgi network. Required for structural integrity of the Golgi complex. This is USP6 N-terminal-like protein (USP6NL) from Homo sapiens (Human).